Reading from the N-terminus, the 463-residue chain is uncharacterized protein (463 aa).

In terms of domain architecture, TRAM spans 9–67; it reads VLKKGQRFPLTIKRLGINGEGVGYFKRHVVFVPGALPGEEVVVEVTDVKPRFAEASIRK. 4 residues coordinate [4Fe-4S] cluster: C80, C86, C89, and C169. The S-adenosyl-L-methionine site is built by Q293, Y322, D343, and D391. The active-site Nucleophile is the C418.

Belongs to the class I-like SAM-binding methyltransferase superfamily. RNA M5U methyltransferase family.

This is an uncharacterized protein from Halalkalibacterium halodurans (strain ATCC BAA-125 / DSM 18197 / FERM 7344 / JCM 9153 / C-125) (Bacillus halodurans).